We begin with the raw amino-acid sequence, 294 residues long: Ribosomal RNA small subunit methyltransferase I (294 aa).

The protein belongs to the methyltransferase superfamily. RsmI family.

It is found in the cytoplasm. It catalyses the reaction cytidine(1402) in 16S rRNA + S-adenosyl-L-methionine = 2'-O-methylcytidine(1402) in 16S rRNA + S-adenosyl-L-homocysteine + H(+). Functionally, catalyzes the 2'-O-methylation of the ribose of cytidine 1402 (C1402) in 16S rRNA. This chain is Ribosomal RNA small subunit methyltransferase I, found in Mesorhizobium japonicum (strain LMG 29417 / CECT 9101 / MAFF 303099) (Mesorhizobium loti (strain MAFF 303099)).